A 453-amino-acid polypeptide reads, in one-letter code: Exodeoxyribonuclease 7 large subunit (453 aa).

It belongs to the XseA family. As to quaternary structure, heterooligomer composed of large and small subunits.

It is found in the cytoplasm. It catalyses the reaction Exonucleolytic cleavage in either 5'- to 3'- or 3'- to 5'-direction to yield nucleoside 5'-phosphates.. Functionally, bidirectionally degrades single-stranded DNA into large acid-insoluble oligonucleotides, which are then degraded further into small acid-soluble oligonucleotides. The sequence is that of Exodeoxyribonuclease 7 large subunit from Geobacter metallireducens (strain ATCC 53774 / DSM 7210 / GS-15).